Reading from the N-terminus, the 282-residue chain is Phosphoglycerate mutase-like protein 1 (282 aa).

Catalysis depends on His-23, which acts as the Tele-phosphohistidine intermediate. The Proton donor/acceptor role is filled by Glu-135.

It belongs to the phosphoglycerate mutase family.

Its function is as follows. May play a role in carbohydrates metabolism. In Arabidopsis thaliana (Mouse-ear cress), this protein is Phosphoglycerate mutase-like protein 1.